We begin with the raw amino-acid sequence, 143 residues long: Lysozyme C (143 aa).

An N-terminal signal peptide occupies residues 1–15; that stretch reads MRCLLLLLLVPVPGA. Positions 16 to 143 constitute a C-type lysozyme domain; it reads KVFERCEWAR…LSSYVAGCGV (128 aa). Intrachain disulfides connect C21–C141, C45–C129, C79–C94, and C90–C108. Residues E50 and D67 contribute to the active site.

It belongs to the glycosyl hydrolase 22 family. Monomer.

The protein resides in the secreted. It catalyses the reaction Hydrolysis of (1-&gt;4)-beta-linkages between N-acetylmuramic acid and N-acetyl-D-glucosamine residues in a peptidoglycan and between N-acetyl-D-glucosamine residues in chitodextrins.. Lysozymes have primarily a bacteriolytic function; those in tissues and body fluids are associated with the monocyte-macrophage system and enhance the activity of immunoagents. This is Lysozyme C (lys) from Scophthalmus maximus (Turbot).